The following is a 470-amino-acid chain: Homogentisate 1,2-dioxygenase (470 aa).

The Fe cation site is built by H356, E362, and H392.

It belongs to the homogentisate dioxygenase family. It depends on Fe cation as a cofactor.

The enzyme catalyses homogentisate + O2 = 4-maleylacetoacetate + H(+). Its pathway is amino-acid degradation; L-phenylalanine degradation; acetoacetate and fumarate from L-phenylalanine: step 4/6. This Oryza sativa subsp. japonica (Rice) protein is Homogentisate 1,2-dioxygenase (HGO).